Reading from the N-terminus, the 387-residue chain is Probable peptidoglycan glycosyltransferase FtsW (387 aa).

Helical transmembrane passes span 19-39 (LDFS…VMVA), 61-81 (ITFL…PMSV), 86-106 (SGLL…PGIG), 118-138 (LGPF…VYFA), 161-181 (VLLI…SVVI), 199-219 (FLLL…ASPY), 286-306 (FIGA…LVIL), 320-340 (YVVF…MGVA), and 352-372 (PFIS…ALVF).

Belongs to the SEDS family. FtsW subfamily.

The protein resides in the cell inner membrane. It catalyses the reaction [GlcNAc-(1-&gt;4)-Mur2Ac(oyl-L-Ala-gamma-D-Glu-L-Lys-D-Ala-D-Ala)](n)-di-trans,octa-cis-undecaprenyl diphosphate + beta-D-GlcNAc-(1-&gt;4)-Mur2Ac(oyl-L-Ala-gamma-D-Glu-L-Lys-D-Ala-D-Ala)-di-trans,octa-cis-undecaprenyl diphosphate = [GlcNAc-(1-&gt;4)-Mur2Ac(oyl-L-Ala-gamma-D-Glu-L-Lys-D-Ala-D-Ala)](n+1)-di-trans,octa-cis-undecaprenyl diphosphate + di-trans,octa-cis-undecaprenyl diphosphate + H(+). It participates in cell wall biogenesis; peptidoglycan biosynthesis. Its function is as follows. Peptidoglycan polymerase that is essential for cell division. This is Probable peptidoglycan glycosyltransferase FtsW from Saccharophagus degradans (strain 2-40 / ATCC 43961 / DSM 17024).